A 577-amino-acid chain; its full sequence is Proton channel OTOP3 (577 aa).

Residues 1–46 (MASQTSAPAEPAPMPSPEAKTTEGASSYDQADMETKHAGSPCPPKQ) are disordered. At 1–69 (MASQTSAPAE…RDRQAQKAGQ (69 aa)) the chain is on the cytoplasmic side. A helical membrane pass occupies residues 70 to 90 (LFSGLLALNVVFLGGAFICSM). Topologically, residues 91–100 (IFNKVSVTLG) are extracellular. The helical transmembrane segment at 101–124 (DVWILLAALKVLSLLWLLYYTVGT) threads the bilayer. The Cytoplasmic segment spans residues 125–140 (TRKPHAVLYRDPHAGP). A helical transmembrane segment spans residues 141 to 162 (IWVRGSLVLFGSCTVCLNIFRM). Residues 163–174 (GYDVSHIHCKSE) are Extracellular-facing. Residues 175–198 (VELIFPAIEIVFMIIQTWVLWRHC) form a helical membrane-spanning segment. Topologically, residues 199-206 (KDCVQVQT) are cytoplasmic. Residues 207–229 (NFTRCGLMLTLATNLLMWVLAVT) form a helical membrane-spanning segment. Topologically, residues 230 to 276 (NDSMHREIEAELDALMEKFSGNGTNTCMCLNTTVCEVFRKGYLMLYP) are extracellular. Residues 277-293 (FSTEYCLICCAVLFVMW) traverse the membrane as a helical segment. At 294–319 (KNVSRSLAAHTGAHPNRSPFRLHGTI) the chain is on the cytoplasmic side. Residues 320-339 (FGPLLGLLALVAGVCVFVLF) traverse the membrane as a helical segment. Residues 340–353 (QIEASGPDIARQYF) lie on the Extracellular side of the membrane. Residues 354–376 (TLYYAFYVAVLPTMSLACLAGTA) form a helical membrane-spanning segment. Over 377–394 (IHGLEERELDTLKNPTRS) the chain is Cytoplasmic. Residues 395-416 (LDVVLLMGAALGQMGIAYFSIV) form a helical membrane-spanning segment. At 417-427 (AIVATQPHELL) the chain is on the extracellular side. A helical membrane pass occupies residues 428–450 (NQLILAYSLLLILQHITQNLFII). Residues 451-510 (EGLHRRPLWEPAVSGVMEKQDVELPRRGSLRELGQDLRRASRAYIHSFSHLNWKRRMLKE) lie on the Cytoplasmic side of the membrane. The chain crosses the membrane as a helical span at residues 511–528 (ISLFLILCNITLWMMPAF). Residues 529-547 (GIHPEFENGLEKDFYGYRT) lie on the Extracellular side of the membrane. Residues 548–570 (WFTIVNFGLPLGVFYRMHSVGGL) form a helical membrane-spanning segment. Over 571–577 (VEVYLGA) the chain is Cytoplasmic.

This sequence belongs to the otopetrin family. Homodimer. As to expression, expressed in epidermis, small intestine, stomach and retina.

It localises to the cell membrane. It carries out the reaction H(+)(in) = H(+)(out). Its activity is regulated as follows. Activated by extracellular acidification. Activated by Zn(2+) under non-acidic conditions. Proton-selective channel gated by extracellular protons. This is Proton channel OTOP3 from Mus musculus (Mouse).